We begin with the raw amino-acid sequence, 203 residues long: UPF0301 protein Sde_3637 (203 aa).

This sequence belongs to the UPF0301 (AlgH) family.

The polypeptide is UPF0301 protein Sde_3637 (Saccharophagus degradans (strain 2-40 / ATCC 43961 / DSM 17024)).